Here is a 105-residue protein sequence, read N- to C-terminus: Replication restart protein PriB (105 aa).

Positions 1-102 (MTTNRLVLSG…LHAEQIELID (102 aa)) constitute an SSB domain.

This sequence belongs to the PriB family. Homodimer. Interacts with PriA and DnaT. Component of the replication restart primosome. Primosome assembly occurs via a 'hand-off' mechanism. PriA binds to replication forks, subsequently PriB then DnaT bind; DnaT then displaces ssDNA to generate the helicase loading substrate.

Involved in the restart of stalled replication forks, which reloads the replicative helicase on sites other than the origin of replication; the PriA-PriB pathway is the major replication restart pathway. During primosome assembly it facilitates complex formation between PriA and DnaT on DNA; stabilizes PriA on DNA. Stimulates the DNA unwinding activity of PriA helicase. This Photorhabdus laumondii subsp. laumondii (strain DSM 15139 / CIP 105565 / TT01) (Photorhabdus luminescens subsp. laumondii) protein is Replication restart protein PriB.